A 396-amino-acid chain; its full sequence is Ribosomal RNA large subunit methyltransferase I (396 aa).

Positions 2 to 81 (TVRLFLAKGR…EEINIEFFIR (80 aa)) constitute a PUA domain.

The protein belongs to the methyltransferase superfamily. RlmI family.

The protein localises to the cytoplasm. The enzyme catalyses cytidine(1962) in 23S rRNA + S-adenosyl-L-methionine = 5-methylcytidine(1962) in 23S rRNA + S-adenosyl-L-homocysteine + H(+). Its function is as follows. Specifically methylates the cytosine at position 1962 (m5C1962) of 23S rRNA. The polypeptide is Ribosomal RNA large subunit methyltransferase I (Serratia proteamaculans (strain 568)).